The sequence spans 272 residues: tRNA pseudouridine synthase A (272 aa).

Catalysis depends on Asp52, which acts as the Nucleophile. Residue Tyr110 coordinates substrate.

This sequence belongs to the tRNA pseudouridine synthase TruA family. Homodimer.

The enzyme catalyses uridine(38/39/40) in tRNA = pseudouridine(38/39/40) in tRNA. Functionally, formation of pseudouridine at positions 38, 39 and 40 in the anticodon stem and loop of transfer RNAs. The protein is tRNA pseudouridine synthase A of Cupriavidus taiwanensis (strain DSM 17343 / BCRC 17206 / CCUG 44338 / CIP 107171 / LMG 19424 / R1) (Ralstonia taiwanensis (strain LMG 19424)).